The following is a 393-amino-acid chain: Mitogen-activated protein kinase SIPK (393 aa).

Positions 1 to 11 (MDGSGQQTDTM) are enriched in polar residues. The disordered stretch occupies residues 1–31 (MDGSGQQTDTMMSDAGAEQPPPAPQPVAGMD). One can recognise a Protein kinase domain in the interval 60–345 (KPPILPIGKG…VEGALAHPYL (286 aa)). ATP-binding positions include 66-74 (IGKGAYGIV) and lysine 89. The active-site Proton acceptor is the aspartate 186. A TXY motif is present at residues 218 to 220 (TEY).

It belongs to the protein kinase superfamily. CMGC Ser/Thr protein kinase family. MAP kinase subfamily. As to quaternary structure, interacts with SIPKK.

The enzyme catalyses L-tyrosyl-[protein] + ATP = O-phospho-L-tyrosyl-[protein] + ADP + H(+). It carries out the reaction L-seryl-[protein] + ATP = O-phospho-L-seryl-[protein] + ADP + H(+). The catalysed reaction is L-threonyl-[protein] + ATP = O-phospho-L-threonyl-[protein] + ADP + H(+). Its activity is regulated as follows. Activated by threonine and tyrosine phosphorylation. Functionally, phosphorylates myelin basic protein (MBP) in vitro. May be involved in disease resistance. In Nicotiana tabacum (Common tobacco), this protein is Mitogen-activated protein kinase SIPK.